Here is a 117-residue protein sequence, read N- to C-terminus: Fluoride-specific ion channel FluC 1 (117 aa).

The next 4 membrane-spanning stretches (helical) occupy residues 1 to 21, 35 to 55, 60 to 80, and 97 to 117; these read MIHI…RAWL, IATL…YGIA, LFSL…STLS, and FSYS…GYSI. Residues G71 and T74 each contribute to the Na(+) site.

This sequence belongs to the fluoride channel Fluc/FEX (TC 1.A.43) family.

The protein resides in the cell membrane. The enzyme catalyses fluoride(in) = fluoride(out). Na(+) is not transported, but it plays an essential structural role and its presence is essential for fluoride channel function. Its function is as follows. Fluoride-specific ion channel. Important for reducing fluoride concentration in the cell, thus reducing its toxicity. This chain is Fluoride-specific ion channel FluC 1, found in Staphylococcus haemolyticus (strain JCSC1435).